Consider the following 91-residue polypeptide: C-C motif chemokine 5 (91 aa).

An N-terminal signal peptide occupies residues 1–23 (MKISAAALTIILTAAALCTPAPA). 2 disulfide bridges follow: Cys-33–Cys-57 and Cys-34–Cys-73.

The protein belongs to the intercrine beta (chemokine CC) family. As to expression, T-cell and macrophage specific.

Its subcellular location is the secreted. Chemoattractant for blood monocytes, memory T-helper cells and eosinophils. Causes the release of histamine from basophils and activates eosinophils. May activate several chemokine receptors including CCR1, CCR3, CCR4 and CCR5. May also be an agonist of the G protein-coupled receptor GPR75. Together with GPR75, may play a role in neuron survival through activation of a downstream signaling pathway involving the PI3, Akt and MAP kinases. By activating GPR75 may also play a role in insulin secretion by islet cells. The sequence is that of C-C motif chemokine 5 (Ccl5) from Mus musculus (Mouse).